The sequence spans 583 residues: Radixin (583 aa).

In terms of domain architecture, FERM spans 5 to 295 (INVRVTTMDA…GNHELYMRRR (291 aa)). 60–63 (KLNK) serves as a coordination point for a 1,2-diacyl-sn-glycero-3-phospho-(1D-myo-inositol). At Lys-83 the chain carries N6-succinyllysine. Lys-278 is an a 1,2-diacyl-sn-glycero-3-phospho-(1D-myo-inositol) binding site. Disordered regions lie at residues 310 to 336 (REEKHQKQLERAQLENEKKKREIAEKE), 374 to 407 (ELDQERKRAKEEAERLEKERRAAEEAKSAIAKQA), and 458 to 526 (KTKE…RVNK). Positions 374–400 (ELDQERKRAKEEAERLEKERRAAEEAK) are enriched in basic and acidic residues. The span at 469–480 (APPPPPPPPVVP) shows a compositional bias: pro residues. Basic and acidic residues-rich tracts occupy residues 483–492 (ENEHDEHDEN) and 506–525 (MNHRSEEERVTETQKNERVN). Thr-564 carries the post-translational modification Phosphothreonine; by ROCK2.

As to quaternary structure, interacts with CPNE1 (via VWFA domain) and CPNE4 (via VWFA domain). Binds NHERF1. Interacts with NHERF1, NHERF2, LAYN, MME/NEP and ICAM2. Interacts (via FERM domain) with SPN/CD43 cytoplasmic tail. Interacts with CD44. Interacts with CLIC5; may work together in a complex which also includes EZR and MYO6 to stabilize linkages between the plasma membrane and subjacent actin cytoskeleton at the base of stereocilia. In terms of processing, phosphorylated by tyrosine-protein kinases. Phosphorylation by ROCK2 suppresses the head-to-tail association of the N-terminal and C-terminal halves resulting in an opened conformation which is capable of actin and membrane-binding.

It localises to the cell membrane. It is found in the cytoplasm. Its subcellular location is the cytoskeleton. The protein localises to the cleavage furrow. The protein resides in the cell projection. It localises to the microvillus. It is found in the stereocilium. A head-to-tail association, of the N-terminal and C-terminal halves results in a closed conformation (inactive form) which is incapable of actin or membrane-binding. Functionally, probably plays a crucial role in the binding of the barbed end of actin filaments to the plasma membrane. The polypeptide is Radixin (RDX) (Sus scrofa (Pig)).